We begin with the raw amino-acid sequence, 78 residues long: Protein GPR15LG (78 aa).

The signal sequence occupies residues 1-24 (MRLLALSGLLCMLLLCFCIFSSEG). 2 disulfides stabilise this stretch: Cys37/Cys60 and Cys38/Cys57.

Interacts with SUSD2; the interaction is direct. As to expression, highly abundant in the testis, colon, eye, and tongue. Detected in the epithelial layer of the colon, but not the small intestine.

The protein localises to the secreted. Its function is as follows. Highly cationic protein that has multiple functions. Acts as a chemotactic factor that mediates lymphocytes recruitment to epithelia through binding and activation of the G-protein coupled receptor GPR15. May be a tumor suppressor; together with SUSD2 has a growth inhibitory effect on colon cancer cells which includes G1 cell cycle arrest. May regulate keratinocyte proliferation. In addition, through activation of Mas-related G protein-coupled receptors (MRGPRs) contributes to pruritogenesis by activating itch-selective sensory neurons and mast cells degranulation. Has antimicrobial activity against Gram-positive bacteria, including Staphylococcus aureus and Actinomyces spec., and Mycoplasma hominis and lentivirus. The polypeptide is Protein GPR15LG (Gpr15lg) (Mus musculus (Mouse)).